The chain runs to 234 residues: Large ribosomal subunit protein uL1 (234 aa).

Belongs to the universal ribosomal protein uL1 family. In terms of assembly, part of the 50S ribosomal subunit.

In terms of biological role, binds directly to 23S rRNA. The L1 stalk is quite mobile in the ribosome, and is involved in E site tRNA release. Protein L1 is also a translational repressor protein, it controls the translation of the L11 operon by binding to its mRNA. The chain is Large ribosomal subunit protein uL1 from Pseudoalteromonas translucida (strain TAC 125).